The following is a 243-amino-acid chain: UPF0246 protein Spy49_1742 (243 aa).

Belongs to the UPF0246 family.

The sequence is that of UPF0246 protein Spy49_1742 from Streptococcus pyogenes serotype M49 (strain NZ131).